Here is a 274-residue protein sequence, read N- to C-terminus: Imidazole glycerol phosphate synthase subunit HisF (274 aa).

Residues Asp-11 and Asp-134 contribute to the active site.

It belongs to the HisA/HisF family. In terms of assembly, heterodimer of HisH and HisF.

It is found in the cytoplasm. The enzyme catalyses 5-[(5-phospho-1-deoxy-D-ribulos-1-ylimino)methylamino]-1-(5-phospho-beta-D-ribosyl)imidazole-4-carboxamide + L-glutamine = D-erythro-1-(imidazol-4-yl)glycerol 3-phosphate + 5-amino-1-(5-phospho-beta-D-ribosyl)imidazole-4-carboxamide + L-glutamate + H(+). It participates in amino-acid biosynthesis; L-histidine biosynthesis; L-histidine from 5-phospho-alpha-D-ribose 1-diphosphate: step 5/9. IGPS catalyzes the conversion of PRFAR and glutamine to IGP, AICAR and glutamate. The HisF subunit catalyzes the cyclization activity that produces IGP and AICAR from PRFAR using the ammonia provided by the HisH subunit. The chain is Imidazole glycerol phosphate synthase subunit HisF from Methanosphaera stadtmanae (strain ATCC 43021 / DSM 3091 / JCM 11832 / MCB-3).